We begin with the raw amino-acid sequence, 194 residues long: 23 kDa U4/U6.U5 small nuclear ribonucleoprotein component (194 aa).

The C2H2-type zinc-finger motif lies at Phe80–His104.

In terms of assembly, component of the U4/U6-U5 tri-snRNP complex composed of the U4, U6 and U5 snRNAs and at least PRP3, PRP4, PRP6, PRP8, PRP18, PRP31, PRP38, SNU13, SNU23, SNU66, SNU114, SPP381, SMB1, SMD1, SMD2, SMD3, SMX2, SMX3, LSM2, LSM3, LSM4, LSM5, LSM6, LSM7, LSM8, BRR2 and DIB1.

It localises to the nucleus. Functionally, participates in pre-mRNA splicing. Part of the U4/U5/U6 tri-snRNP complex, one of the building blocks of the spliceosome. This Saccharomyces cerevisiae (strain ATCC 204508 / S288c) (Baker's yeast) protein is 23 kDa U4/U6.U5 small nuclear ribonucleoprotein component (SNU23).